Here is a 983-residue protein sequence, read N- to C-terminus: Inner tegument protein (983 aa).

An interaction with large tegument protein region spans residues 474-983 (LNVNTHFAVQ…TSVSLPPASP (510 aa)). Positions 901–932 (APWESAPQPPRLRMTPDTDHEESTAGATSVPE) are disordered. Residues 914–923 (MTPDTDHEES) are compositionally biased toward basic and acidic residues.

The protein belongs to the herpesviridae inner tegument protein family. As to quaternary structure, interacts (via C-terminus) with the large tegument protein/LTP (via N-terminus).

The protein resides in the virion tegument. Its subcellular location is the host cytoplasm. The protein localises to the host nucleus. It is found in the host Golgi apparatus. It localises to the host trans-Golgi network. In terms of biological role, plays an essential role in cytoplasmic secondary envelopment during viral egress. Interacts with the capsid via the large tegument protein/LTP and participates in its transport to the host trans-Golgi network (TGN) where secondary envelopment occurs. Modulates tegumentation and capsid accumulation at the viral assembly complex. The protein is Inner tegument protein (UL47) of Homo sapiens (Human).